We begin with the raw amino-acid sequence, 64 residues long: Large ribosomal subunit protein bL35 (64 aa).

Belongs to the bacterial ribosomal protein bL35 family.

The polypeptide is Large ribosomal subunit protein bL35 (Ureaplasma urealyticum serovar 10 (strain ATCC 33699 / Western)).